Consider the following 387-residue polypeptide: O-methyltransferase fsr2 (387 aa).

S-adenosyl-L-methionine is bound at residue aspartate 231. Histidine 280 acts as the Proton acceptor in catalysis.

This sequence belongs to the class I-like SAM-binding methyltransferase superfamily. Cation-independent O-methyltransferase family. COMT subfamily.

The protein operates within polyketide biosynthesis. In terms of biological role, O-methyltransferase; part of the gene cluster that mediates the biosynthesis of fusarubins, highly pigmented naphthoquinones responsible for the coloration of the fruiting bodies. The non-reducing polyketide synthase FSR1 is responsible for the condensation of seven acetyl-CoA units to yield a haptaketide. After rings A and B are formed by aldol-type cyclization, the PKS-derived product is released as 6-O-demethylfusarubinaldehyde. Then, two hydroxyl groups at C-5 and C-10 are incorporated by FSR3, and simultaneously hydroxyl groups at C-6 and C-8 are methylated by FSR2. The aldehyde is, on the one hand, reduced by FSR3 to 8-O-methylfusarubin alcohol, which equilibrates mainly with 8-O-methylfusarubin and only small amounts of 8-O-methylnectriafurone. On the other hand, the aldehyde can be oxidized to form 8-O-methylfusarubinic acid, a reaction driven by FSR3 equilibrating with 8-O-methylfusarubinlactone, finally resulting in 8-O-methylanhydrofusarubinlactol after a further reduction step and loss of water. 8-O-Methylfusarubinic acid can also undergo decarboxylation, resulting in 8-O-methyl-13-hydroxynorjavanicin after another hydroxylation step at C-13. Both steps are most likely also accomplished by FSR3. No enzymatic function has been determined so far for either FSR4 and FSR5. Their deletion does not alter the product spectrum, but the possibility that they catalyze specific enzymatic steps during perithecium development cannot be ruled out. FSR4 might possess a regulatory function in the biosynthesis of fusarubins. The protein is O-methyltransferase fsr2 of Gibberella fujikuroi (strain CBS 195.34 / IMI 58289 / NRRL A-6831) (Bakanae and foot rot disease fungus).